Here is a 379-residue protein sequence, read N- to C-terminus: Nematocin receptor 1 (379 aa).

Residues 19-48 lie on the Extracellular side of the membrane; it reads HNLYLFQMLELQENITDSQPMDPPSLEIMM. A glycan (N-linked (GlcNAc...) asparagine) is linked at N32. The chain crosses the membrane as a helical span at residues 49 to 69; the sequence is LHHLMIILVTLFGNTLLIYVI. The Cytoplasmic segment spans residues 70 to 95; the sequence is YKNNAVLRRKRVTPVQMLMLHMCAAD. Residues 96-116 form a helical membrane-spanning segment; that stretch reads ILFALISVGPTMAITATVPFF. Over 117-124 the chain is Extracellular; that stretch reads YGPNLLCK. C123 and C196 are oxidised to a cystine. Residues 125–145 form a helical membrane-spanning segment; it reads LTKFLQVIPMYASSFLLVAIS. Topologically, residues 146–168 are cytoplasmic; it reads ADRYQAICRPLASMKSSIYNRPA. A helical membrane pass occupies residues 169–189; that stretch reads LYSGIAWTAAILFSTPQLYLF. At 190–207 the chain is on the extracellular side; sequence EKRNGDCSENYTTALQYQ. An N-linked (GlcNAc...) asparagine glycan is attached at N199. A helical transmembrane segment spans residues 208-228; that stretch reads LYVCLFNSVVWLLPSAIAGWL. Residues 229 to 289 lie on the Cytoplasmic side of the membrane; it reads YLCVCKAVWK…DRRRVQTVKL (61 aa). A helical transmembrane segment spans residues 290–310; the sequence is TLTIVAANFVLWAPFCITSVI. Over 311–320 the chain is Extracellular; it reads DAVWPTAINS. Residue N319 is glycosylated (N-linked (GlcNAc...) asparagine). Residues 321 to 343 traverse the membrane as a helical segment; it reads TFATYIMFFGNLNSCMNPWLWFH. The Cytoplasmic segment spans residues 344 to 379; it reads FNRKQLKRACPCRKSSEPLIQSLVYVHVMTSEQSDF.

The protein belongs to the G-protein coupled receptor 1 family. Vasopressin/oxytocin receptor subfamily. In terms of tissue distribution, detected in the left ASE gustatory neuron, the chemosensory neuron pairs ASH and ADF, and the PQR tail neuron. In males, detected in hook and tail sensory neurons involved in vulval sensing and hermaphrodite contact, and in spicule protractor muscles.

Its subcellular location is the cell membrane. In terms of biological role, receptor for nematocin. The activity of this receptor is mediated by G proteins which activate a phosphatidylinositol-calcium second messenger system. The activity of this receptor may be modulated by ntr-2, leading to reduced intracellular cAMP production. Plays a role in gustatory associative learning. Also plays a role in male mating behavior. This is Nematocin receptor 1 from Caenorhabditis elegans.